Reading from the N-terminus, the 569-residue chain is Hexose transporter HXT8 (569 aa).

Positions 1–38 (MTDRKTNLPEEPIFEEAEDDGCPSIENSSHLSVPTVEE) are disordered. Residues 1-61 (MTDRKTNLPE…EVVVPEKPAS (61 aa)) are Cytoplasmic-facing. Residues 12-21 (PIFEEAEDDG) are compositionally biased toward acidic residues. The helical transmembrane segment at 62–82 (AYATVSIMCLCMAFGGFMSGW) threads the bilayer. Residues 83 to 118 (DTGTISGFVNQTDFLRRFGNYSHSKNTYYLSNVRTG) are Extracellular-facing. N92 and N102 each carry an N-linked (GlcNAc...) asparagine glycan. The helical transmembrane segment at 119-139 (LIVSIFNVGSAIGCLFLSKLG) threads the bilayer. Topologically, residues 140–145 (DIYGRC) are cytoplasmic. The chain crosses the membrane as a helical span at residues 146–166 (MGLIIVIVVYMVGIVIQIASI). At 167–176 (DKWYQYFIGR) the chain is on the extracellular side. The chain crosses the membrane as a helical span at residues 177 to 197 (IIAGIGAGSISVLAPMLISET). Topologically, residues 198 to 203 (APKHIR) are cytoplasmic. A helical membrane pass occupies residues 204–224 (GTLLACWQLMVTFAIFLGYCT). At 225–238 (NYGTKTYSNSVQWR) the chain is on the extracellular side. The chain crosses the membrane as a helical span at residues 239–259 (VPLGLCFAWAIIMIGGMTFVP). At 260-342 (ESPRFLVQVG…INSLQQLTGD (83 aa)) the chain is on the cytoplasmic side. Residues 343-359 (NYFFYYGTTIFKSVGMN) traverse the membrane as a helical segment. Over 360-365 (DSFETS) the chain is Extracellular. A helical membrane pass occupies residues 366 to 383 (IVLGIVNFASCFFSLYSV). The Cytoplasmic segment spans residues 384–390 (DKLGRRR). A helical transmembrane segment spans residues 391-411 (CLLLGAATMTACMVIYASVGV). Over 412-433 (TRLYPNGKSEPSSKGAGNCTIV) the chain is Extracellular. The N-linked (GlcNAc...) asparagine glycan is linked to N429. Residues 434 to 454 (FTCFYIFCFSCTWGPVCYVII) traverse the membrane as a helical segment. Topologically, residues 455 to 471 (SETFPLRVRSKCMSVAT) are cytoplasmic. The helical transmembrane segment at 472 to 492 (AANLLWGFLIGFFTPFITSAI) threads the bilayer. A topological domain (extracellular) is located at residue N493. Residues 494–514 (FYYGYVFMGCLAFSYFYVFFF) form a helical membrane-spanning segment. The Cytoplasmic portion of the chain corresponds to 515-569 (VPETKGLTLEEVDEMWMDGVLPWKSESWVPASRRDGDYDNEKLQHDEKPFYKRMF).

This sequence belongs to the major facilitator superfamily. Sugar transporter (TC 2.A.1.1) family.

It localises to the membrane. Functionally, probable glucose transporter. The chain is Hexose transporter HXT8 (HXT8) from Saccharomyces cerevisiae (strain ATCC 204508 / S288c) (Baker's yeast).